We begin with the raw amino-acid sequence, 255 residues long: MSDSDASRPSAIASDGPDAAGKHASGAPWRNFYGRFKGKTLKPNQVRDLDEMLPELSPGAVGWDENPEREPLDLEAQFQGRDVWLEVGFGGGEHLVHQAESNPDVGIIGAEPYVNGVAMLLGKLRKSSAENVRVHAGDARDLMDVLPAQSLSRAFLLYPDPWPKARHHRRRFVTQEHLEPLARVLKPGAIFRVATDIPDYVRQTLEEVPKAGFKWLAEGPEDWRKPWGDWISTRYEQKALREGRTPHYLTFQRQD.

The interval 1–29 (MSDSDASRPSAIASDGPDAAGKHASGAPW) is disordered. Glutamate 86, glutamate 111, aspartate 138, and aspartate 160 together coordinate S-adenosyl-L-methionine. Aspartate 160 is an active-site residue. Substrate contacts are provided by residues lysine 164, aspartate 196, and 233–236 (TRYE).

The protein belongs to the class I-like SAM-binding methyltransferase superfamily. TrmB family.

The catalysed reaction is guanosine(46) in tRNA + S-adenosyl-L-methionine = N(7)-methylguanosine(46) in tRNA + S-adenosyl-L-homocysteine. Its pathway is tRNA modification; N(7)-methylguanine-tRNA biosynthesis. Functionally, catalyzes the formation of N(7)-methylguanine at position 46 (m7G46) in tRNA. This Ruegeria sp. (strain TM1040) (Silicibacter sp.) protein is tRNA (guanine-N(7)-)-methyltransferase.